The following is a 237-amino-acid chain: Large ribosomal subunit protein uL1 (237 aa).

Belongs to the universal ribosomal protein uL1 family. Part of the 50S ribosomal subunit.

In terms of biological role, binds directly to 23S rRNA. The L1 stalk is quite mobile in the ribosome, and is involved in E site tRNA release. Its function is as follows. Protein L1 is also a translational repressor protein, it controls the translation of the L11 operon by binding to its mRNA. The chain is Large ribosomal subunit protein uL1 from Dehalococcoides mccartyi (strain CBDB1).